The following is a 252-amino-acid chain: N-acetylglucosaminyl-phosphatidylinositol de-N-acetylase (252 aa).

A helical membrane pass occupies residues 2-22 (EVVGLLCVAVAVLTWGFLRVW). Residues 23–252 (NSAERMRSPE…YMSVNSLQLL (230 aa)) are Cytoplasmic-facing.

It belongs to the PIGL family.

It localises to the endoplasmic reticulum membrane. The enzyme catalyses a 6-(N-acetyl-alpha-D-glucosaminyl)-1-(1,2-diacyl-sn-glycero-3-phospho)-1D-myo-inositol + H2O = a 6-(alpha-D-glucosaminyl)-1-(1,2-diacyl-sn-glycero-3-phospho)-1D-myo-inositol + acetate. Its pathway is glycolipid biosynthesis; glycosylphosphatidylinositol-anchor biosynthesis. Catalyzes the second step of glycosylphosphatidylinositol (GPI) biosynthesis, which is the de-N-acetylation of N-acetylglucosaminyl-phosphatidylinositol. This chain is N-acetylglucosaminyl-phosphatidylinositol de-N-acetylase (Pigl), found in Rattus norvegicus (Rat).